We begin with the raw amino-acid sequence, 480 residues long: NADH-quinone oxidoreductase subunit N (480 aa).

Transmembrane regions (helical) follow at residues 11–31, 38–58, 74–94, 109–129, 163–183, 200–220, 239–259, 273–293, 301–321, 329–349, 372–392, 405–425, and 451–471; these read VIPE…DLFV, ITYG…IALA, GLSD…FLYS, YVLG…YSFL, FILG…LYGI, GAGL…GLAF, PTSV…AIIM, WQGM…VVAI, MLAY…LAGT, LFYT…IILL, FAFI…TVGF, VEMI…AFYY, and VVLS…GLLM.

It belongs to the complex I subunit 2 family. In terms of assembly, NDH-1 is composed of 14 different subunits. Subunits NuoA, H, J, K, L, M, N constitute the membrane sector of the complex.

It is found in the cell inner membrane. The catalysed reaction is a quinone + NADH + 5 H(+)(in) = a quinol + NAD(+) + 4 H(+)(out). NDH-1 shuttles electrons from NADH, via FMN and iron-sulfur (Fe-S) centers, to quinones in the respiratory chain. The immediate electron acceptor for the enzyme in this species is believed to be ubiquinone. Couples the redox reaction to proton translocation (for every two electrons transferred, four hydrogen ions are translocated across the cytoplasmic membrane), and thus conserves the redox energy in a proton gradient. The sequence is that of NADH-quinone oxidoreductase subunit N from Thioalkalivibrio sulfidiphilus (strain HL-EbGR7).